The chain runs to 648 residues: S-M checkpoint control protein rad4 (648 aa).

BRCT domains are found at residues 2 to 92 (GSSK…DDGL) and 96 to 185 (KHFL…YFQL). The Nuclear localization signal motif lies at 242–249 (KRGKKRDR). 2 BRCT domains span residues 298-384 (NEAK…EHAL) and 392-486 (SLVP…SPWA). S592 carries the post-translational modification Phosphoserine. A Nuclear localization signal motif is present at residues 643-648 (RKLRRR).

As to quaternary structure, interacts with drc1/sld2. Interacts (via BRCT1,2 domains) with crb2; a single rad4 molecule interacts simultaneously with both 'Thr-187' phosphorylation sites in a crb2 dimer.

It is found in the nucleus. Its function is as follows. Essential component for DNA replication and also the checkpoint control system which couples S and M phases. May directly or indirectly interact with chromatin proteins to form the complex required for the initiation and/or progression of DNA synthesis. Interacts simultaneously with both 'Thr-187' phosphorylation sites in a crb2 dimer for establishing the DNA checkpoint. The chain is S-M checkpoint control protein rad4 (rad4) from Schizosaccharomyces pombe (strain 972 / ATCC 24843) (Fission yeast).